The chain runs to 473 residues: Presenilin-B (473 aa).

The tract at residues 1–141 (MSSDNNNDPF…PLLNKKEKDD (141 aa)) is disordered. The Cytoplasmic segment spans residues 1 to 164 (MSSDNNNDPF…DDEVSLQDFS (164 aa)). The segment covering 22–46 (RVSTTTSPNRQSINSSPKQSSPKST) has biased composition (polar residues). Residues 54 to 72 (NIILDLNDNNNDNNNTNNY) show a composition bias toward low complexity. Residues 79 to 89 (VDNKNKFENKD) are compositionally biased toward basic and acidic residues. A helical membrane pass occupies residues 165-185 (SMIVSIIIPVSITMMAVVFFV). The Lumenal portion of the chain corresponds to 186–224 (KYLNNQTLYASTLSYTIAGGSSGGGSGADSITGNSFVDS). Residue Asn-190 is glycosylated (N-linked (GlcNAc...) asparagine). Residues 225–245 (LIVAGIVLGMIIVTTVAFVLL) traverse the membrane as a helical segment. Residues 246-252 (YKYRCLK) lie on the Cytoplasmic side of the membrane. Residues 253–273 (ILYGWLFLSVGMMLGSFGTTF) form a helical membrane-spanning segment. Residues 274-286 (FQAMLSAANLPLD) are Lumenal-facing. A helical membrane pass occupies residues 287–307 (YITFAFLIFNFTVCGIIGVFW). Position 308 (Tyr-308) is a topological domain, cytoplasmic. Residues 309 to 329 (AHQYVNQLYLVIISVLMAISL) traverse the membrane as a helical segment. Residues 330 to 334 (TRLPQ) are Lumenal-facing. Residues 335 to 355 (WTIFTLLVIVAIYDLFAVLCP) form a helical membrane-spanning segment. Residue Asp-348 is part of the active site. Residues 356-389 (RGPLKVLVELSQERNENIPALVYETGKGSDSNLK) are Cytoplasmic-facing. The helical transmembrane segment at 390–410 (LGLGDFIFYSLLISRAALVHM) threads the bilayer. Asp-394 is a catalytic residue. Over 411-413 (SCV) the chain is Lumenal. The helical transmembrane segment at 414 to 434 (FSTFIAILTGLFLTLLCLAIF) threads the bilayer. Residues 435-442 (KKALPALP) lie on the Cytoplasmic side of the membrane. A PAL motif is present at residues 439-441 (PAL). Residues 443 to 463 (ISIFLGILFYYLSNNFLTPFI) constitute an intramembrane region (helical). Residues 464-473 (EALTLSQIFV) lie on the Cytoplasmic side of the membrane.

Belongs to the peptidase A22A family. In terms of assembly, homodimer. Component of the gamma-secretase complex, a complex composed of a presenilin homodimer, nicastrin, aph1 and pen2.

The protein localises to the endoplasmic reticulum membrane. Its subcellular location is the golgi apparatus membrane. Functionally, probable catalytic subunit of the gamma-secretase complex, an endoprotease complex that catalyzes the intramembrane cleavage of integral membrane proteins such as Notch receptors. Requires the other members of the gamma-secretase complex to have a protease activity. The sequence is that of Presenilin-B (psenB) from Dictyostelium discoideum (Social amoeba).